Reading from the N-terminus, the 396-residue chain is Acetate kinase (396 aa).

N8 lines the Mg(2+) pocket. K15 is an ATP binding site. Residue R90 participates in substrate binding. The active-site Proton donor/acceptor is the D147. Residues 207–211, 283–285, and 330–334 contribute to the ATP site; these read HLGSG, DMR, and GIGEN. Residue E384 coordinates Mg(2+).

The protein belongs to the acetokinase family. As to quaternary structure, homodimer. It depends on Mg(2+) as a cofactor. The cofactor is Mn(2+).

The protein resides in the cytoplasm. The enzyme catalyses acetate + ATP = acetyl phosphate + ADP. The protein operates within metabolic intermediate biosynthesis; acetyl-CoA biosynthesis; acetyl-CoA from acetate: step 1/2. In terms of biological role, catalyzes the formation of acetyl phosphate from acetate and ATP. Can also catalyze the reverse reaction. In Lacticaseibacillus paracasei (strain ATCC 334 / BCRC 17002 / CCUG 31169 / CIP 107868 / KCTC 3260 / NRRL B-441) (Lactobacillus paracasei), this protein is Acetate kinase.